A 158-amino-acid chain; its full sequence is Ribosome maturation factor RimP (158 aa).

This sequence belongs to the RimP family.

The protein localises to the cytoplasm. Its function is as follows. Required for maturation of 30S ribosomal subunits. This is Ribosome maturation factor RimP from Pseudomonas syringae pv. tomato (strain ATCC BAA-871 / DC3000).